The primary structure comprises 450 residues: CD209 antigen (450 aa).

Over 1–37 the chain is Cytoplasmic; that stretch reads MSDSKEPSVQQLGLLEEEQLRGLGFRQTRGYKSLAGC. 3 short sequence motifs (endocytosis signal) span residues 14–15, 16–18, and 31–34; these read LL, EEE, and YKSL. The chain crosses the membrane as a helical; Signal-anchor for type II membrane protein span at residues 38-58; it reads LGHGALVLQLLSFTLLAGLLI. Topologically, residues 59-450 are extracellular; that stretch reads QVSKFPSSIS…APATPNPPPV (392 aa). Asparagine 80 carries N-linked (GlcNAc...) asparagine glycosylation. Repeat copies occupy residues 96 to 118, 119 to 141, 142 to 164, 165 to 187, 188 to 210, 211 to 233, 234 to 256, 257 to 279, and 280 to 303. Residues 96-303 are 9 X approximate tandem repeats; sequence KLQEIYQELT…AVERLCRPCP (208 aa). Disulfide bonds link cysteine 302–cysteine 313, cysteine 330–cysteine 423, and cysteine 402–cysteine 415. The C-type lectin domain maps to 309–424; sequence FQGNCYFMSN…CNLAKFWICK (116 aa). Glutamate 393, asparagine 395, valine 397, glutamate 400, asparagine 411, and aspartate 412 together coordinate Ca(2+).

As to quaternary structure, homotetramer. Interacts with C1QBP; the interaction is indicative for a C1q:C1QBP:CD209 signaling complex. Interacts with ICAM2 and ICAM3 by binding to mannose-like carbohydrates. Interacts (via C-type lectin domain) with CEACAM1 (via Lewis X moieties); this interaction is regulated by the glycosylation pattern of CEACAM1 on cell types and regulates contact between dendritic cells and neutrophils.

The protein resides in the membrane. Its function is as follows. Pathogen-recognition receptor expressed on the surface of immature dendritic cells (DCs) and involved in initiation of primary immune response. Thought to mediate the endocytosis of pathogens which are subsequently degraded in lysosomal compartments. The receptor returns to the cell membrane surface and the pathogen-derived antigens are presented to resting T-cells via MHC class II proteins to initiate the adaptive immune response. Probably recognizes in a calcium-dependent manner high mannose N-linked oligosaccharides in a variety of pathogen antigens. On DCs it is a high affinity receptor for ICAM2 and ICAM3 by binding to mannose-like carbohydrates. May act as a DC rolling receptor that mediates transendothelial migration of DC presursors from blood to tissues by binding endothelial ICAM2. Seems to regulate DC-induced T-cell proliferation by binding to ICAM3 on T-cells in the immunological synapse formed between DC and T-cells. The sequence is that of CD209 antigen (CD209) from Hylobates lar (Lar gibbon).